We begin with the raw amino-acid sequence, 209 residues long: Lectin (209 aa).

Homodimer; non-covalently linked.

In terms of biological role, binds chito-oligosaccherides. Has hemagglutinating activity towards rabbit erythrocytes. This is Lectin from Luffa acutangula (Ridged gourd).